The following is a 733-amino-acid chain: Vinexin (733 aa).

4 disordered regions span residues 1 to 51 (MARI…SNLD), 129 to 165 (TWPGPGSRPSMSPKPPASQHAQNWSATWTKDSKRQDK), 224 to 285 (SARA…NQVP), and 352 to 448 (ETRL…KRKA). The span at 32-42 (DPNRVHTKEQL) shows a compositional bias: basic and acidic residues. Over residues 147 to 157 (QHAQNWSATWT) the composition is skewed to polar residues. In terms of domain architecture, SoHo spans 164–232 (DKRWVKYEGI…VSARASSAEP (69 aa)). 2 stretches are compositionally biased toward polar residues: residues 245 to 256 (PGTTETSSGRNW) and 264 to 277 (RNTFNYNFRPSSSG). Phosphoserine is present on residues serine 412 and serine 459. 2 consecutive SH3 domains span residues 444–503 (KKRK…VLPA) and 518–579 (LEYG…INRE). The binds to vinculin stretch occupies residues 444–579 (KKRKAARLKF…PASYVQINRE (136 aa)). A disordered region spans residues 584–672 (LCDDGPQLPA…INLGPSSPNT (89 aa)). Serine 594 bears the Phosphoserine; by MAPK1 mark. Over residues 597 to 613 (PTTTAHLSSHSHPSSIP) the composition is skewed to low complexity. Residues serine 607, serine 610, and serine 624 each carry the phosphoserine modification. Polar residues predominate over residues 638–651 (EPRSQTQSLNTPGP). The SH3 3 domain maps to 674-733 (IHWTPYRAMYQYRPQNEDELELREGDRVDVMQQCDDGWFVGVSRRTQKFGTFPGNYVAPV). The segment at 674–733 (IHWTPYRAMYQYRPQNEDELELREGDRVDVMQQCDDGWFVGVSRRTQKFGTFPGNYVAPV) is binds to SOS.

As to quaternary structure, interacts with vinculin by the first two SH3 domains and the proline rich region of vinculin. Binds to SOS (guanine nucleotide exchange factor of RAS and RAC), through its third SH3 domain. The formation of this complex is down-regulated by phosphorylation of SOS. Interacts with SAFB2, INPPL1/SHIP2 and SRCIN1. Interacts with DLG5 through its third SH3 domain. Interacts with SOCS7 and MAPK1/ERK2. Interacts with FASLG. Phosphorylated at Ser-594 by MAPK1/ERK2 during cell spreading.

It is found in the cell junction. It localises to the focal adhesion. The protein localises to the cytoplasm. Its subcellular location is the cytoskeleton. Its function is as follows. Promotes up-regulation of actin stress fiber formation. The sequence is that of Vinexin (Sorbs3) from Mus musculus (Mouse).